The sequence spans 67 residues: Probable Sec-independent protein translocase protein TatE (67 aa).

A helical transmembrane segment spans residues 1–21 (MEGISIAKLLIIGALIVLLFG). Residues 46–67 (EDTSATRTTAEDVPAERVVHKD) form a disordered region.

The protein belongs to the TatA/E family. TatE subfamily.

The protein localises to the cell inner membrane. Part of the twin-arginine translocation (Tat) system that transports large folded proteins containing a characteristic twin-arginine motif in their signal peptide across membranes. TatE shares overlapping functions with TatA. This chain is Probable Sec-independent protein translocase protein TatE, found in Pantoea vagans (strain C9-1) (Pantoea agglomerans (strain C9-1)).